The following is a 275-amino-acid chain: Large ribosomal subunit protein uL2c (275 aa).

Positions 219–255 (TVRGSVMNPCDHPHGGGEGRAPIGRTRPLTPWGKPAL) are disordered.

Belongs to the universal ribosomal protein uL2 family. In terms of assembly, part of the 50S ribosomal subunit.

Its subcellular location is the plastid. It localises to the chloroplast. The polypeptide is Large ribosomal subunit protein uL2c (rpl2) (Trieres chinensis (Marine centric diatom)).